We begin with the raw amino-acid sequence, 118 residues long: Large ribosomal subunit protein bL20 (118 aa).

The protein belongs to the bacterial ribosomal protein bL20 family.

In terms of biological role, binds directly to 23S ribosomal RNA and is necessary for the in vitro assembly process of the 50S ribosomal subunit. It is not involved in the protein synthesizing functions of that subunit. This Lacticaseibacillus casei (strain BL23) (Lactobacillus casei) protein is Large ribosomal subunit protein bL20.